Here is a 273-residue protein sequence, read N- to C-terminus: Putative carboxypeptidase YodJ (273 aa).

An N-terminal signal peptide occupies residues 1 to 23 (MKKSGKWFSLAAALSVTAIVGAG). C24 is lipidated: N-palmitoyl cysteine. The S-diacylglycerol cysteine moiety is linked to residue C24. A disordered region spans residues 27–58 (SNGDAQKDTKTTAETKQTEQKTADSKKSNTQN). Positions 31–53 (AQKDTKTTAETKQTEQKTADSKK) are enriched in basic and acidic residues.

The protein belongs to the peptidase M15B family.

Its subcellular location is the cell membrane. This is Putative carboxypeptidase YodJ (yodJ) from Bacillus subtilis (strain 168).